The primary structure comprises 334 residues: Protein-methionine-sulfoxide reductase catalytic subunit MsrP (334 aa).

Positions 1-44 form a signal peptide, tat-type signal; the sequence is MKKNQFLKESDVTAESVFFMKRRQVLKALGISAAAFSLPHAAHA. Mo-molybdopterin-binding positions include Asn88, 91–92, Cys146, Thr181, Asn233, Arg238, and 249–251; these read YE and GIK.

This sequence belongs to the MsrP family. Heterodimer of a catalytic subunit (MsrP) and a heme-binding subunit (MsrQ). Requires Mo-molybdopterin as cofactor. In terms of processing, predicted to be exported by the Tat system. The position of the signal peptide cleavage has not been experimentally proven.

It is found in the periplasm. The enzyme catalyses L-methionyl-[protein] + a quinone + H2O = L-methionyl-(S)-S-oxide-[protein] + a quinol. It catalyses the reaction L-methionyl-[protein] + a quinone + H2O = L-methionyl-(R)-S-oxide-[protein] + a quinol. Its function is as follows. Part of the MsrPQ system that repairs oxidized periplasmic proteins containing methionine sulfoxide residues (Met-O), using respiratory chain electrons. Thus protects these proteins from oxidative-stress damage caused by reactive species of oxygen and chlorine generated by the host defense mechanisms. MsrPQ is essential for the maintenance of envelope integrity under bleach stress, rescuing a wide series of structurally unrelated periplasmic proteins from methionine oxidation, including the primary periplasmic chaperone SurA and the lipoprotein Pal. The catalytic subunit MsrP is non-stereospecific, being able to reduce both (R-) and (S-) diastereoisomers of methionine sulfoxide. This Escherichia coli O7:K1 (strain IAI39 / ExPEC) protein is Protein-methionine-sulfoxide reductase catalytic subunit MsrP.